The primary structure comprises 141 residues: Putative antiporter subunit mnhB2 (141 aa).

A run of 4 helical transmembrane segments spans residues Thr10–Gly30, Gly35–Phe55, Ile70–Gly90, and Val116–Ile136.

This sequence belongs to the CPA3 antiporters (TC 2.A.63) subunit B family. As to quaternary structure, may form a heterooligomeric complex that consists of seven subunits: mnhA2, mnhB2, mnhC2, mnhD2, mnhE2, mnhF2 and mnhG2.

The protein resides in the cell membrane. The protein is Putative antiporter subunit mnhB2 (mnhB2) of Staphylococcus saprophyticus subsp. saprophyticus (strain ATCC 15305 / DSM 20229 / NCIMB 8711 / NCTC 7292 / S-41).